The sequence spans 489 residues: Mitochondrial-processing peptidase subunit beta (489 aa).

Residues 1-45 constitute a mitochondrion transit peptide; the sequence is MAAAALSRTLLPEARRRLWGFTRRLPLRRAAAQPLYFGGDRLRST. Position 101 (histidine 101) interacts with Zn(2+). The active-site Proton acceptor is the glutamate 104. Zn(2+)-binding residues include histidine 105 and glutamate 181.

It belongs to the peptidase M16 family. As to quaternary structure, heterodimer of PMPCA (alpha) and PMPCB (beta) subunits, forming the mitochondrial processing protease (MPP) in which PMPCA is involved in substrate recognition and binding and PMPCB is the catalytic subunit. Requires Zn(2+) as cofactor.

The protein resides in the mitochondrion matrix. The enzyme catalyses Release of N-terminal transit peptides from precursor proteins imported into the mitochondrion, typically with Arg in position P2.. Its activity is regulated as follows. Binding to PMPCA is required for catalytic activity. Functionally, catalytic subunit of the essential mitochondrial processing protease (MPP), which cleaves the mitochondrial sequence off newly imported precursors proteins. Preferentially, cleaves after an arginine at position P2. Required for PINK1 turnover by coupling PINK1 mitochondrial import and cleavage, which results in subsequent PINK1 proteolysis. The protein is Mitochondrial-processing peptidase subunit beta (Pmpcb) of Mus musculus (Mouse).